The primary structure comprises 415 residues: Corticotropin-releasing factor receptor 1 (415 aa).

Residues M1–T23 form the signal peptide. Residues S24 to K111 are Extracellular-facing. Cystine bridges form between C30–C54, C44–C87, and C68–C102. N38, N45, N78, N90, and N98 each carry an N-linked (GlcNAc...) asparagine glycan. Residues Y99–E108 are important for peptide agonist binding. The chain crosses the membrane as a helical span at residues S112–L142. Residues R143–C149 are Cytoplasmic-facing. The helical transmembrane segment at L150–L174 threads the bilayer. Residues T175–R189 lie on the Extracellular side of the membrane. A disulfide bridge links C188 with C258. A helical membrane pass occupies residues L190–V218. Topologically, residues L219–R225 are cytoplasmic. A helical transmembrane segment spans residues L226–Y253. Residues D254–D269 lie on the Extracellular side of the membrane. The chain crosses the membrane as a helical span at residues Y270–M295. Residues L280 to I290 form an important for antagonist binding region. Residues T296–T306 are Cytoplasmic-facing. S301 carries the post-translational modification Phosphoserine; by PKA. The helical transmembrane segment at I307–F331 threads the bilayer. Over V332 to E338 the chain is Extracellular. A helical transmembrane segment spans residues V339 to S368. The Cytoplasmic segment spans residues E369–V415.

This sequence belongs to the G-protein coupled receptor 2 family. Interacts (via N-terminal extracellular domain) with CRH and UCN. Interacts with DLG1; this inhibits endocytosis of CRHR1 after agonist binding. Heterodimer; heterodimerizes with GPER1. Post-translationally, C-terminal Ser or Thr residues may be phosphorylated. Phosphorylation at Ser-301 by PKA prevents maximal coupling to Gq-protein, and thereby negatively regulates downstream signaling. As to expression, detected in brain, especially in cerebellum. Detected in pituitary gland, and at lower levels in the olfactory bulb.

It is found in the cell membrane. Its subcellular location is the endosome. In terms of biological role, G-protein coupled receptor for CRH (corticotropin-releasing factor) and UCN (urocortin). Has high affinity for CRH and UCN. Ligand binding causes a conformation change that triggers signaling via guanine nucleotide-binding proteins (G proteins) and down-stream effectors, such as adenylate cyclase. Promotes the activation of adenylate cyclase, leading to increased intracellular cAMP levels. Inhibits the activity of the calcium channel CACNA1H. Required for normal embryonic development of the adrenal gland and for normal hormonal responses to stress. Plays a role in the response to anxiogenic stimuli. The sequence is that of Corticotropin-releasing factor receptor 1 (Crhr1) from Rattus norvegicus (Rat).